The following is a 118-amino-acid chain: 5-hydroxyisourate hydrolase (118 aa).

His-7, Arg-46, and Tyr-115 together coordinate substrate.

This sequence belongs to the transthyretin family. 5-hydroxyisourate hydrolase subfamily. Homotetramer.

The enzyme catalyses 5-hydroxyisourate + H2O = 5-hydroxy-2-oxo-4-ureido-2,5-dihydro-1H-imidazole-5-carboxylate + H(+). In terms of biological role, catalyzes the hydrolysis of 5-hydroxyisourate (HIU) to 2-oxo-4-hydroxy-4-carboxy-5-ureidoimidazoline (OHCU). The chain is 5-hydroxyisourate hydrolase from Brucella melitensis biotype 1 (strain ATCC 23456 / CCUG 17765 / NCTC 10094 / 16M).